We begin with the raw amino-acid sequence, 533 residues long: WD repeat-containing protein PAC11 (533 aa).

Residues 1–19 show a composition bias toward basic and acidic residues; the sequence is MERLKQLEEKRRQLKELRE. A disordered region spans residues 1-36; the sequence is MERLKQLEEKRRQLKELRERRKQASLFPGSETMGHH. WD repeat units follow at residues 380–422 and 432–475; these read FDEV…YLSL and NHST…AIIG.

As to quaternary structure, interacts with NUM1, when DYN1 is present.

It is found in the cytoplasm. The protein localises to the cytoskeleton. Functionally, required for viability in the absence of the kinesin-related CIN8 mitotic motor. May be a dynein intermediate chain. The polypeptide is WD repeat-containing protein PAC11 (PAC11) (Saccharomyces cerevisiae (strain ATCC 204508 / S288c) (Baker's yeast)).